A 327-amino-acid chain; its full sequence is Interleukin-12 subunit beta (327 aa).

The N-terminal stretch at 1 to 22 (MHPQQLVVSWFSLVLLASPIVA) is a signal peptide. Positions 23–106 (IWELEKNVYV…LSRSLLLLHK (84 aa)) constitute an Ig-like C2-type domain. C50 and C90 form a disulfide bridge. N223 is a glycosylation site (N-linked (GlcNAc...) asparagine). A Fibronectin type-III domain is found at 238-327 (PPKNLQLRPL…WSEWASVSCS (90 aa)).

The protein belongs to the IL-12B family. In terms of assembly, heterodimer with IL12A; disulfide-linked. The heterodimer is known as interleukin IL-12. Heterodimer with IL23A; disulfide-linked. The heterodimer is known as interleukin IL-23. Also secreted as a monomer. Interacts with NBR1; this interaction promotes IL-12 secretion.

It is found in the secreted. Its function is as follows. Cytokine that can act as a growth factor for activated T and NK cells, enhance the lytic activity of NK/lymphokine-activated killer cells, and stimulate the production of IFN-gamma by resting PBMC. Associates with IL23A to form the IL-23 interleukin, a heterodimeric cytokine which functions in innate and adaptive immunity. IL-23 may constitute with IL-17 an acute response to infection in peripheral tissues. IL-23 binds to a heterodimeric receptor complex composed of IL12RB1 and IL23R, activates the Jak-Stat signaling cascade, stimulates memory rather than naive T-cells and promotes production of pro-inflammatory cytokines. IL-23 induces autoimmune inflammation and thus may be responsible for autoimmune inflammatory diseases and may be important for tumorigenesis. The chain is Interleukin-12 subunit beta (IL12B) from Capra hircus (Goat).